The chain runs to 512 residues: Cytochrome P450 4d1 (512 aa).

Heme is bound by residues Glu-316 and Cys-456.

It belongs to the cytochrome P450 family. Heme is required as a cofactor.

It localises to the endoplasmic reticulum membrane. The protein localises to the microsome membrane. Involved in the metabolism of insect hormones and in the breakdown of synthetic insecticides. The protein is Cytochrome P450 4d1 (Cyp4d1) of Drosophila melanogaster (Fruit fly).